Consider the following 485-residue polypeptide: UDP-glycosyltransferase 71B2 (485 aa).

Residues Ser-287, Ala-354 to Gln-356, His-371 to Glu-379, and Tyr-393 to Gln-396 each bind UDP-alpha-D-glucose.

Belongs to the UDP-glycosyltransferase family.

Glucosyltransferase that glucosylates the cell wall inhibitor hypostatin in vivo to form a bioactive glucoside. The chain is UDP-glycosyltransferase 71B2 (UGT71B2) from Arabidopsis thaliana (Mouse-ear cress).